A 276-amino-acid chain; its full sequence is Large ribosomal subunit protein uL2 (276 aa).

Residues 224-276 (VMNPVDHPHGGGEGKAPIGRKSPMTPWGKPTLGYKTRKKKNKSDKFIIRRRKK) are disordered. Residues 258–276 (KTRKKKNKSDKFIIRRRKK) are compositionally biased toward basic residues.

The protein belongs to the universal ribosomal protein uL2 family. In terms of assembly, part of the 50S ribosomal subunit. Forms a bridge to the 30S subunit in the 70S ribosome.

One of the primary rRNA binding proteins. Required for association of the 30S and 50S subunits to form the 70S ribosome, for tRNA binding and peptide bond formation. It has been suggested to have peptidyltransferase activity; this is somewhat controversial. Makes several contacts with the 16S rRNA in the 70S ribosome. In Geobacillus thermodenitrificans (strain NG80-2), this protein is Large ribosomal subunit protein uL2.